The chain runs to 273 residues: Proteasome subunit beta type-10 (273 aa).

Methionine 1 carries the N-acetylmethionine modification. The propeptide at 1 to 39 is removed in mature form; it reads MLKQAVEPTGGFSFENCQRNASLEHVLPGLRVPHARKTG. Catalysis depends on threonine 40, which acts as the Nucleophile.

This sequence belongs to the peptidase T1B family. The 26S proteasome consists of a 20S proteasome core and two 19S regulatory subunits. The 20S proteasome core is composed of 28 subunits that are arranged in four stacked rings, resulting in a barrel-shaped structure. The two end rings are each formed by seven alpha subunits, and the two central rings are each formed by seven beta subunits. The catalytic chamber with the active sites is on the inside of the barrel. Component of the immunoproteasome, where it displaces the equivalent housekeeping subunit PSMB7. Component of the spermatoproteasome, a form of the proteasome specifically found in testis. Autocleaved. The resulting N-terminal Thr residue of the mature subunit is responsible for the nucleophile proteolytic activity. In terms of tissue distribution, detected in liver (at protein level).

The protein localises to the cytoplasm. It localises to the nucleus. It carries out the reaction Cleavage of peptide bonds with very broad specificity.. Functionally, the proteasome is a multicatalytic proteinase complex which is characterized by its ability to cleave peptides with Arg, Phe, Tyr, Leu, and Glu adjacent to the leaving group at neutral or slightly basic pH. The proteasome has an ATP-dependent proteolytic activity. This subunit is involved in antigen processing to generate class I binding peptides. Plays a role in determining the T-cell repertoire for an antiviral T-cell response. This Mus musculus (Mouse) protein is Proteasome subunit beta type-10 (Psmb10).